We begin with the raw amino-acid sequence, 148 residues long: Cystatin-D (148 aa).

An N-terminal signal peptide occupies residues 1-33 (MASLLSPSMPVLAAVALTLTLAVIPEASTNAEA). In terms of domain architecture, Cystatin kininogen-type spans 36-148 (VVLGGVEPAD…SMTNFNCYNF (113 aa)). 2 disulfide bridges follow: C101-C111 and C125-C145.

It belongs to the cystatin family. As to expression, in cartilage, expressed mainly in mature chondrocytes including prehypertrophic and hypertrophic cells (at protein level). Expressed exclusively in cartilage.

The protein resides in the cytoplasm. It localises to the cytosol. Functionally, may play a role in the last steps of the chondrocyte differentiation pathway as an inducer of maturation. Induces chondrocyte calcification during endochondral ossification by playing a role in the transcriptional inhibition of ENPP1, a generator of pyrophosphate which inhibits calcification. Possibly impairs the binding of a transcription factor to the ENPP1 promoter. Unlike other cystatins, does not have thiol protease inhibitor activity. The chain is Cystatin-D from Mus musculus (Mouse).